The sequence spans 396 residues: Acetate kinase (396 aa).

Residue N6 coordinates Mg(2+). ATP is bound at residue K13. R89 provides a ligand contact to substrate. D145 serves as the catalytic Proton donor/acceptor. Residues 205 to 209 (HLGNG), 280 to 282 (DMR), and 329 to 333 (GVGEN) contribute to the ATP site. E383 serves as a coordination point for Mg(2+).

The protein belongs to the acetokinase family. Homodimer. The cofactor is Mg(2+). Mn(2+) serves as cofactor.

The protein resides in the cytoplasm. It catalyses the reaction acetate + ATP = acetyl phosphate + ADP. It functions in the pathway metabolic intermediate biosynthesis; acetyl-CoA biosynthesis; acetyl-CoA from acetate: step 1/2. Its function is as follows. Catalyzes the formation of acetyl phosphate from acetate and ATP. Can also catalyze the reverse reaction. In Mesoplasma florum (strain ATCC 33453 / NBRC 100688 / NCTC 11704 / L1) (Acholeplasma florum), this protein is Acetate kinase.